Consider the following 711-residue polypeptide: RB-associated KRAB zinc finger protein (711 aa).

The KRAB domain maps to 8 to 79; the sequence is LSFKDVAVAF…EGDRHAQRHL (72 aa). Glycyl lysine isopeptide (Lys-Gly) (interchain with G-Cter in SUMO2) cross-links involve residues K97 and K256. A required for interaction with RB1 region spans residues 170–257; that stretch reads AYGESLEDFN…YPRSQMELKP (88 aa). C2H2-type zinc fingers lie at residues 258–280 and 286–308; these read FECTQCGKSFCKKSKFIIHQRAH and YACSVCGKSFSQKGTLTVHRRSH. A Glycyl lysine isopeptide (Lys-Gly) (interchain with G-Cter in SUMO2) cross-link involves residue K312. C2H2-type zinc fingers lie at residues 314 to 336, 342 to 364, 370 to 392, 398 to 420, 426 to 448, and 454 to 476; these read YKCNECGKTFCQKLHLTQHQRTH, YECSECGKSFCQKTHLTLHQRNH, YPCNECGKSFSRKSALNDHQRTH, YKCNECGKSYYRKSTLITHQRTH, YQCSECGKFFSRVSYLTIHYRSH, and YECTECGKTFNLNSAFIRHWKVH. A Glycyl lysine isopeptide (Lys-Gly) (interchain with G-Cter in SUMO2) cross-link involves residue K354. Residues 414-711 form an interaction with AR region; that stretch reads ITHQRTHTGE…TVNVLTVEKL (298 aa). Residues 508 to 530 form a C2H2-type 9; degenerate zinc finger; sequence YECNECGKTFLDSSAFHRHQSVP. A Glycyl lysine isopeptide (Lys-Gly) (interchain with G-Cter in SUMO2) cross-link involves residue K534. C2H2-type zinc fingers lie at residues 536-558, 564-586, 592-614, 620-642, 648-670, and 676-698; these read YECNICGKSFSDSSCYTVHYRGH, FGCSECGKTFSHNSSLFRHQRVH, YECYECGKFFSQKSYLTIHHRIH, YECSKCGKVFSRMSNLTVHYRSH, YECNECGKVFSQKSYLTVHYRTH, and YECNECGKKFHHRSAFNSHQRIH.

The protein belongs to the krueppel C2H2-type zinc-finger protein family. As to quaternary structure, interacts with AR. May also interact with other nuclear hormone receptors such as NR3C1/GR. Interacts with RB1.

It localises to the nucleus. May repress E2F-dependent transcription. May promote AR-dependent transcription. The protein is RB-associated KRAB zinc finger protein (Rbak) of Mus musculus (Mouse).